The chain runs to 296 residues: Nucleotide-binding protein SGO_0954 (296 aa).

13–20 (GMSGAGKT) is an ATP binding site. 63–66 (DMRS) lines the GTP pocket.

This sequence belongs to the RapZ-like family.

Functionally, displays ATPase and GTPase activities. The protein is Nucleotide-binding protein SGO_0954 of Streptococcus gordonii (strain Challis / ATCC 35105 / BCRC 15272 / CH1 / DL1 / V288).